The primary structure comprises 258 residues: MASTAPIGVFDSGLGGISVAREIRRDMPNEHVLYFGDSANAPYGTKSPEQVRELSDVIVKRFVEQGVKAVVIACNTATSAAANELRDTYDIPIIGMEPALKVACDRGHGKRQRVIVAATPLTLRERKFAVLMDRFKADHTIFPEPCPGLVEIVEHGQLDDHDVVMRTLHQYFDQYDLSTIDSVVLGCTHFVFYRDYFRELLPDTAAIIDGNEGTVRHLGVVLESLGKLAPEDAEGSIDLANSDTSARIAQLAQSLLDR.

Substrate contacts are provided by residues 11-12 (DS) and 43-44 (YG). Catalysis depends on Cys-74, which acts as the Proton donor/acceptor. Position 75-76 (75-76 (NT)) interacts with substrate. Cys-187 serves as the catalytic Proton donor/acceptor. 188 to 189 (TH) contacts substrate.

The protein belongs to the aspartate/glutamate racemases family.

The catalysed reaction is L-glutamate = D-glutamate. It functions in the pathway cell wall biogenesis; peptidoglycan biosynthesis. Provides the (R)-glutamate required for cell wall biosynthesis. The sequence is that of Glutamate racemase from Bifidobacterium adolescentis (strain ATCC 15703 / DSM 20083 / NCTC 11814 / E194a).